The following is a 501-amino-acid chain: Proline--tRNA ligase (501 aa).

Belongs to the class-II aminoacyl-tRNA synthetase family.

It carries out the reaction tRNA(Pro) + L-proline + ATP = L-prolyl-tRNA(Pro) + AMP + diphosphate. This is Proline--tRNA ligase from Encephalitozoon cuniculi (strain GB-M1) (Microsporidian parasite).